We begin with the raw amino-acid sequence, 132 residues long: Small ribosomal subunit protein uS8 (132 aa).

It belongs to the universal ribosomal protein uS8 family. Part of the 30S ribosomal subunit. Contacts proteins S5 and S12.

Its function is as follows. One of the primary rRNA binding proteins, it binds directly to 16S rRNA central domain where it helps coordinate assembly of the platform of the 30S subunit. In Geobacillus sp. (strain WCH70), this protein is Small ribosomal subunit protein uS8.